We begin with the raw amino-acid sequence, 233 residues long: Large ribosomal subunit protein uL1 (233 aa).

It belongs to the universal ribosomal protein uL1 family. As to quaternary structure, part of the 50S ribosomal subunit.

In terms of biological role, binds directly to 23S rRNA. The L1 stalk is quite mobile in the ribosome, and is involved in E site tRNA release. Protein L1 is also a translational repressor protein, it controls the translation of the L11 operon by binding to its mRNA. This chain is Large ribosomal subunit protein uL1, found in Marinomonas sp. (strain MWYL1).